A 173-amino-acid polypeptide reads, in one-letter code: ATP-dependent protease subunit HslV (173 aa).

Thr2 is an active-site residue. Residues Gly158, Asp161, and Ser164 each contribute to the Na(+) site.

This sequence belongs to the peptidase T1B family. HslV subfamily. A double ring-shaped homohexamer of HslV is capped on each side by a ring-shaped HslU homohexamer. The assembly of the HslU/HslV complex is dependent on binding of ATP.

It is found in the cytoplasm. It carries out the reaction ATP-dependent cleavage of peptide bonds with broad specificity.. Its activity is regulated as follows. Allosterically activated by HslU binding. Its function is as follows. Protease subunit of a proteasome-like degradation complex believed to be a general protein degrading machinery. The protein is ATP-dependent protease subunit HslV of Actinobacillus pleuropneumoniae serotype 5b (strain L20).